A 631-amino-acid chain; its full sequence is 1-deoxy-D-xylulose-5-phosphate synthase (631 aa).

Thiamine diphosphate is bound by residues His-74 and 115 to 117; that span reads GHS. Asp-146 serves as a coordination point for Mg(2+). Residues 147 to 148, Asn-175, Tyr-286, and Glu-368 each bind thiamine diphosphate; that span reads GA. Residue Asn-175 participates in Mg(2+) binding.

Belongs to the transketolase family. DXPS subfamily. As to quaternary structure, homodimer. Requires Mg(2+) as cofactor. Thiamine diphosphate serves as cofactor.

It catalyses the reaction D-glyceraldehyde 3-phosphate + pyruvate + H(+) = 1-deoxy-D-xylulose 5-phosphate + CO2. Its pathway is metabolic intermediate biosynthesis; 1-deoxy-D-xylulose 5-phosphate biosynthesis; 1-deoxy-D-xylulose 5-phosphate from D-glyceraldehyde 3-phosphate and pyruvate: step 1/1. Its function is as follows. Catalyzes the acyloin condensation reaction between C atoms 2 and 3 of pyruvate and glyceraldehyde 3-phosphate to yield 1-deoxy-D-xylulose-5-phosphate (DXP). This is 1-deoxy-D-xylulose-5-phosphate synthase from Natranaerobius thermophilus (strain ATCC BAA-1301 / DSM 18059 / JW/NM-WN-LF).